Here is a 317-residue protein sequence, read N- to C-terminus: Melanocyte-stimulating hormone receptor (317 aa).

At 1-37 (MPMQGAQKRLLGSLNSTPTATPNLGLAANHTGAPCLE) the chain is on the extracellular side. An N-linked (GlcNAc...) asparagine glycan is attached at N29. A helical transmembrane segment spans residues 38–63 (VSIPDGLFLSLGLVSLVENVLVVAAI). Residues 64–72 (AKNRNLHSP) are Cytoplasmic-facing. A helical transmembrane segment spans residues 73–93 (MYCFICCLALSDLLVSSSNML). Residues 94-118 (ETAVILLLEAGALATRASVVQQLQN) lie on the Extracellular side of the membrane. The helical transmembrane segment at 119–140 (TIDVLTCSSMLCSLCFLGAIAV) threads the bilayer. Over 141-163 (DRHVSIFYALRYHSIMTLARARR) the chain is Cytoplasmic. Residues 164 to 183 (AIAAIWVASVLSSTLFIAYC) traverse the membrane as a helical segment. Topologically, residues 184 to 191 (DHAXVLLC) are extracellular. Residues 192 to 211 (LVVFFLAMLVLMAVLYVHML) traverse the membrane as a helical segment. The Cytoplasmic portion of the chain corresponds to 212-240 (ARACQHAQGITRLHQRQPPAHQGFGFRGA). A helical membrane pass occupies residues 241-266 (ATLTILLGIFFLCWGPFFLHLTLVVL). The Extracellular portion of the chain corresponds to 267 to 279 (CPQHLTCSCIFKN). A helical membrane pass occupies residues 280–300 (FKVFLTLIICSTIIDPLIYAF). Over 301-317 (RSQELRRTLKELLLCSW) the chain is Cytoplasmic. C315 carries the S-palmitoyl cysteine lipid modification.

This sequence belongs to the G-protein coupled receptor 1 family. In terms of assembly, interacts with MGRN1, but does not undergo MGRN1-mediated ubiquitination; this interaction competes with GNAS-binding and thus inhibits agonist-induced cAMP production. Interacts with OPN3; the interaction results in a decrease in MC1R-mediated cAMP signaling and ultimately a decrease in melanin production in melanocytes.

The protein localises to the cell membrane. Functionally, receptor for MSH (alpha, beta and gamma) and ACTH. The activity of this receptor is mediated by G proteins which activate adenylate cyclase. Mediates melanogenesis, the production of eumelanin (black/brown) and phaeomelanin (red/yellow), via regulation of cAMP signaling in melanocytes. This is Melanocyte-stimulating hormone receptor (MC1R) from Ateles paniscus (Black spider monkey).